The primary structure comprises 835 residues: Translation initiation factor IF-2 (835 aa).

The interval 1 to 240 is disordered; the sequence is MSDSDGKKTL…RKQERARQKA (240 aa). Residues 50-59 show a composition bias toward gly residues; it reads AGKGGAGGVA. The segment covering 86–152 has biased composition (basic and acidic residues); the sequence is KAREAEEAAQ…AEAAKKRAAA (67 aa). Low complexity predominate over residues 153 to 169; that stretch reads DKAAAAAPKSDAGVAPA. The segment covering 184–205 has biased composition (basic and acidic residues); the sequence is RKAEREREERGRGAKGRNDGGR. One can recognise a tr-type G domain in the interval 332 to 500; that stretch reads PRPPVITIMG…AIALQAEILE (169 aa). The tract at residues 341 to 348 is G1; that stretch reads GHVDHGKT. 341–348 serves as a coordination point for GTP; it reads GHVDHGKT. Residues 366–370 are G2; the sequence is GITQH. The tract at residues 388–391 is G3; that stretch reads DTPG. GTP contacts are provided by residues 388–392 and 442–445; these read DTPGH and NKID. Residues 442 to 445 are G4; that stretch reads NKID. Residues 478-480 form a G5 region; the sequence is SAH.

It belongs to the TRAFAC class translation factor GTPase superfamily. Classic translation factor GTPase family. IF-2 subfamily.

Its subcellular location is the cytoplasm. Its function is as follows. One of the essential components for the initiation of protein synthesis. Protects formylmethionyl-tRNA from spontaneous hydrolysis and promotes its binding to the 30S ribosomal subunits. Also involved in the hydrolysis of GTP during the formation of the 70S ribosomal complex. The protein is Translation initiation factor IF-2 of Ruegeria sp. (strain TM1040) (Silicibacter sp.).